The following is a 456-amino-acid chain: RUN domain-containing protein 3B (456 aa).

Positions methionine 1 to leucine 24 are disordered. The segment covering glycine 8–lysine 21 has biased composition (gly residues). Arginine 13 bears the Omega-N-methylarginine mark. The 133-residue stretch at aspartate 57–glutamate 189 folds into the RUN domain. A phosphoserine mark is found at serine 215 and serine 216. A disordered region spans residues serine 216–valine 237. Polar residues predominate over residues leucine 224 to glutamate 235. A coiled-coil region spans residues alanine 300 to asparagine 325. Polar residues predominate over residues serine 382 to valine 405. A disordered region spans residues serine 382 to glutamate 411.

The protein belongs to the RUNDC3 family. In terms of assembly, interacts with RAP2A.

This chain is RUN domain-containing protein 3B (RUNDC3B), found in Pongo abelii (Sumatran orangutan).